The primary structure comprises 364 residues: Fructose-bisphosphate aldolase A (364 aa).

The residue at position 5 (Y5) is a Phosphotyrosine. Phosphothreonine is present on T9. 2 positions are modified to phosphoserine: S36 and S39. Residue K42 is modified to N6-acetyllysine; alternate. K42 participates in a covalent cross-link: Glycyl lysine isopeptide (Lys-Gly) (interchain with G-Cter in SUMO1); alternate. K42 is covalently cross-linked (Glycyl lysine isopeptide (Lys-Gly) (interchain with G-Cter in SUMO2); alternate). Beta-D-fructose 1,6-bisphosphate is bound at residue R43. A Phosphoserine modification is found at S46. K99 carries the N6-(2-hydroxyisobutyryl)lysine modification. K108 is modified (N6-acetyllysine). Position 111 is an N6-acetyllysine; alternate (K111). The residue at position 111 (K111) is an N6-malonyllysine; alternate. At S132 the chain carries Phosphoserine. An N6-(2-hydroxyisobutyryl)lysine modification is found at K147. E188 acts as the Proton acceptor in catalysis. The active-site Schiff-base intermediate with dihydroxyacetone-P is K230. Phosphoserine is present on S272. Beta-D-fructose 1,6-bisphosphate is bound by residues 272–274 (SGG), S301, and R304. K312 bears the N6-malonyllysine mark. Position 330 is an N6-acetyllysine (K330).

It belongs to the class I fructose-bisphosphate aldolase family. In terms of assembly, homotetramer. Interacts with SNX9 and WAS. Interacts with FBP2; the interaction blocks FBP2 inhibition by physiological concentrations of AMP and reduces inhibition by Ca(2+).

It localises to the cytoplasm. The protein localises to the myofibril. The protein resides in the sarcomere. It is found in the i band. Its subcellular location is the m line. It carries out the reaction beta-D-fructose 1,6-bisphosphate = D-glyceraldehyde 3-phosphate + dihydroxyacetone phosphate. It functions in the pathway carbohydrate degradation; glycolysis; D-glyceraldehyde 3-phosphate and glycerone phosphate from D-glucose: step 4/4. Functionally, catalyzes the reversible conversion of beta-D-fructose 1,6-bisphosphate (FBP) into two triose phosphate and plays a key role in glycolysis and gluconeogenesis. In addition, may also function as scaffolding protein. In Homo sapiens (Human), this protein is Fructose-bisphosphate aldolase A.